Here is a 334-residue protein sequence, read N- to C-terminus: Retinol dehydrogenase 13 (334 aa).

Ser-2 carries the post-translational modification N-acetylserine. 45-51 (GANTGIG) contacts NADP(+). Ser-174 contacts substrate. Tyr-200 (proton acceptor) is an active-site residue.

The protein belongs to the short-chain dehydrogenases/reductases (SDR) family.

The protein localises to the mitochondrion inner membrane. It catalyses the reaction all-trans-retinol + NADP(+) = all-trans-retinal + NADPH + H(+). The protein operates within cofactor metabolism; retinol metabolism. Its function is as follows. Retinol dehydrogenase with a clear preference for NADP. Oxidizes all-trans-retinol, but seems to reduce all-trans-retinal with much higher efficiency. Has no activity towards steroid. This Mus musculus (Mouse) protein is Retinol dehydrogenase 13 (Rdh13).